The following is a 251-amino-acid chain: Endonuclease NucS (251 aa).

Residues 230–240 (LEPPKKGNEKR) are compositionally biased toward basic and acidic residues. The disordered stretch occupies residues 230–251 (LEPPKKGNEKRSKQKTLDFFTP).

The protein belongs to the NucS endonuclease family. As to quaternary structure, homodimer. Interacts with PCNA.

It is found in the cytoplasm. With respect to regulation, activity is modulated by PCNA. PCNA increases the binding affinity of NucS towards ssDNA as well as branched DNA substrates carrying either 3' or 5' flaps. PCNA is also required for optimal loading of NucS on its substrates and to direct activity towards ss/dsDNA junction. Functionally, cleaves both 3' and 5' ssDNA extremities of branched DNA structures. Binds to ssDNA. This is Endonuclease NucS from Pyrococcus abyssi (strain GE5 / Orsay).